We begin with the raw amino-acid sequence, 440 residues long: Thymidine phosphorylase (440 aa).

The protein belongs to the thymidine/pyrimidine-nucleoside phosphorylase family. As to quaternary structure, homodimer.

The catalysed reaction is thymidine + phosphate = 2-deoxy-alpha-D-ribose 1-phosphate + thymine. It participates in pyrimidine metabolism; dTMP biosynthesis via salvage pathway; dTMP from thymine: step 1/2. Its function is as follows. The enzymes which catalyze the reversible phosphorolysis of pyrimidine nucleosides are involved in the degradation of these compounds and in their utilization as carbon and energy sources, or in the rescue of pyrimidine bases for nucleotide synthesis. This is Thymidine phosphorylase from Erwinia tasmaniensis (strain DSM 17950 / CFBP 7177 / CIP 109463 / NCPPB 4357 / Et1/99).